Here is an 84-residue protein sequence, read N- to C-terminus: KSIFERDNRRDWLVIPDAVAAYVYETVNKMFPKVGQFLADAAQIPVIVGTRNFLIRETSKLSILAEQMMEKVKTLWNTKVLGYY.

Belongs to the apovitellenin family. Monomer.

Its function is as follows. Protein component of the very low density lipoprotein (VLDL) of egg-laying females. Potent lipoprotein lipase inhibitor, preventing the loss of triglycerides from VLDL on their way from the liver to the growing oocytes. This Dromaius novaehollandiae (Emu) protein is Apovitellenin-1.